The primary structure comprises 136 residues: UPF0213 protein AHA_3736 (136 aa).

The GIY-YIG domain occupies 17–92 (SHWFIYMVRT…KQQSKAFKEQ (76 aa)). Residues 114–136 (QKRPRYAAAKEGSDNRECQRQVD) form a disordered region. Over residues 124–136 (EGSDNRECQRQVD) the composition is skewed to basic and acidic residues.

The protein belongs to the UPF0213 family.

The protein is UPF0213 protein AHA_3736 of Aeromonas hydrophila subsp. hydrophila (strain ATCC 7966 / DSM 30187 / BCRC 13018 / CCUG 14551 / JCM 1027 / KCTC 2358 / NCIMB 9240 / NCTC 8049).